A 304-amino-acid chain; its full sequence is MIRDTKQPIKVPAKPASRSGGKAKTVKPKTVKPKAVKAADGKAASAKASTSKAAVSKTSAKAAAAKPASAKGLKGVIAMAPPSFRRERALIKRGIWPIAGCDEAGRGPLAGPVVAAAVVLDPKRVPKGLDDSKRLSAEKREALFEEICATAQVSVVYASPERINRDNILRASLWALTRAVHALPDLPRHVFVDGRDRLATQCDCEAVIGGDGLIASIAAASIIAKVSRDRLMCKLAEQCPGYGFEQHKGYGVPEHLDALARLGPTVHHRRFFAPVAAAWQKIEGAPQPQIRDLFEADVTVEATA.

A disordered region spans residues 1 to 53 (MIRDTKQPIKVPAKPASRSGGKAKTVKPKTVKPKAVKAADGKAASAKASTSKA). The segment covering 24–35 (KTVKPKTVKPKA) has biased composition (basic residues). Low complexity predominate over residues 36-53 (VKAADGKAASAKASTSKA). Residues 96 to 284 (WPIAGCDEAG…VAAAWQKIEG (189 aa)) enclose the RNase H type-2 domain. Residues aspartate 102, glutamate 103, and aspartate 193 each contribute to the a divalent metal cation site.

It belongs to the RNase HII family. Requires Mn(2+) as cofactor. Mg(2+) is required as a cofactor.

It localises to the cytoplasm. The catalysed reaction is Endonucleolytic cleavage to 5'-phosphomonoester.. Endonuclease that specifically degrades the RNA of RNA-DNA hybrids. In Rhodopseudomonas palustris (strain ATCC BAA-98 / CGA009), this protein is Ribonuclease HII.